The chain runs to 398 residues: ATP-dependent RNA helicase eIF4A (398 aa).

The Q motif motif lies at 25–53 (DSFDTMNLKPELLRGVYAYGFERPSAIQQ). The Helicase ATP-binding domain maps to 56–226 (IMPVIKGHDV…TKFMRDPVRI (171 aa)). An ATP-binding site is contributed by 69–76 (AQSGTGKT). The DEAD box signature appears at 174–177 (DEAD). The 162-residue stretch at 237–398 (GIKQFYIAVE…EMPMNVADLI (162 aa)) folds into the Helicase C-terminal domain.

Belongs to the DEAD box helicase family. eIF4A subfamily. Component of the eIF4F complex, which composition varies with external and internal environmental conditions. It is composed of at least eIF4A, eIF4E and eIF4G.

It localises to the cytoplasm. It catalyses the reaction ATP + H2O = ADP + phosphate + H(+). Its function is as follows. ATP-dependent RNA helicase which is a subunit of the eIF4F complex involved in cap recognition and is required for mRNA binding to ribosome. In the current model of translation initiation, eIF4A unwinds RNA secondary structures in the 5'-UTR of mRNAs which is necessary to allow efficient binding of the small ribosomal subunit, and subsequent scanning for the initiator codon. The chain is ATP-dependent RNA helicase eIF4A (tif1) from Botryotinia fuckeliana (strain B05.10) (Noble rot fungus).